We begin with the raw amino-acid sequence, 208 residues long: Peroxiredoxin (208 aa).

The region spanning 2–156 (PLLGDDFPQL…IVRAVKALQT (155 aa)) is the Thioredoxin domain. The Cysteine sulfenic acid (-SOH) intermediate role is filled by Cys44. Residue Arg119 coordinates substrate.

It belongs to the peroxiredoxin family. Prx6 subfamily. As to quaternary structure, homodecamer. Pentamer of dimers that assemble into a ring structure.

Its subcellular location is the cytoplasm. The catalysed reaction is a hydroperoxide + [thioredoxin]-dithiol = an alcohol + [thioredoxin]-disulfide + H2O. Functionally, thiol-specific peroxidase that catalyzes the reduction of hydrogen peroxide and organic hydroperoxides to water and alcohols, respectively. Plays a role in cell protection against oxidative stress by detoxifying peroxides. This Treponema denticola (strain ATCC 35405 / DSM 14222 / CIP 103919 / JCM 8153 / KCTC 15104) protein is Peroxiredoxin.